Here is a 170-residue protein sequence, read N- to C-terminus: Adenine phosphoribosyltransferase (170 aa).

It belongs to the purine/pyrimidine phosphoribosyltransferase family. In terms of assembly, homodimer.

It localises to the cytoplasm. It catalyses the reaction AMP + diphosphate = 5-phospho-alpha-D-ribose 1-diphosphate + adenine. The protein operates within purine metabolism; AMP biosynthesis via salvage pathway; AMP from adenine: step 1/1. Catalyzes a salvage reaction resulting in the formation of AMP, that is energically less costly than de novo synthesis. In Trichodesmium erythraeum (strain IMS101), this protein is Adenine phosphoribosyltransferase.